Reading from the N-terminus, the 77-residue chain is U8-lycotoxin-Ls1u (77 aa).

The signal sequence occupies residues 1–20 (MKLIIFTGLVLFAIVSLIEA). The propeptide occupies 21 to 26 (QAENEK).

The protein belongs to the neurotoxin 19 (CSTX) family. 08 (U8-Lctx) subfamily. Contains 4 disulfide bonds. Expressed by the venom gland.

It is found in the secreted. The sequence is that of U8-lycotoxin-Ls1u from Lycosa singoriensis (Wolf spider).